The primary structure comprises 142 residues: Large ribosomal subunit protein uL13 (142 aa).

The protein belongs to the universal ribosomal protein uL13 family. Part of the 50S ribosomal subunit.

In terms of biological role, this protein is one of the early assembly proteins of the 50S ribosomal subunit, although it is not seen to bind rRNA by itself. It is important during the early stages of 50S assembly. The chain is Large ribosomal subunit protein uL13 from Bordetella avium (strain 197N).